Here is a 283-residue protein sequence, read N- to C-terminus: Pantothenate synthetase (283 aa).

30–37 contributes to the ATP binding site; sequence MGALHRGH. Histidine 37 functions as the Proton donor in the catalytic mechanism. Glutamine 61 is a (R)-pantoate binding site. Glutamine 61 serves as a coordination point for beta-alanine. ATP is bound at residue 147–150; it reads GQKD. Glutamine 153 provides a ligand contact to (R)-pantoate. Residues isoleucine 176 and 184 to 187 each bind ATP; that span reads MSSR.

This sequence belongs to the pantothenate synthetase family. In terms of assembly, homodimer.

The protein localises to the cytoplasm. It carries out the reaction (R)-pantoate + beta-alanine + ATP = (R)-pantothenate + AMP + diphosphate + H(+). Its pathway is cofactor biosynthesis; (R)-pantothenate biosynthesis; (R)-pantothenate from (R)-pantoate and beta-alanine: step 1/1. Its function is as follows. Catalyzes the condensation of pantoate with beta-alanine in an ATP-dependent reaction via a pantoyl-adenylate intermediate. This Cytophaga hutchinsonii (strain ATCC 33406 / DSM 1761 / CIP 103989 / NBRC 15051 / NCIMB 9469 / D465) protein is Pantothenate synthetase.